The chain runs to 216 residues: Uracil phosphoribosyltransferase (216 aa).

5-phospho-alpha-D-ribose 1-diphosphate-binding positions include arginine 85, arginine 110, and 135-143 (DPMVATGYS). Uracil is bound by residues isoleucine 200 and 205–207 (GDA). Residue aspartate 206 coordinates 5-phospho-alpha-D-ribose 1-diphosphate.

Belongs to the UPRTase family. The cofactor is Mg(2+).

It catalyses the reaction UMP + diphosphate = 5-phospho-alpha-D-ribose 1-diphosphate + uracil. The protein operates within pyrimidine metabolism; UMP biosynthesis via salvage pathway; UMP from uracil: step 1/1. Allosterically activated by GTP. Functionally, catalyzes the conversion of uracil and 5-phospho-alpha-D-ribose 1-diphosphate (PRPP) to UMP and diphosphate. This Burkholderia cenocepacia (strain ATCC BAA-245 / DSM 16553 / LMG 16656 / NCTC 13227 / J2315 / CF5610) (Burkholderia cepacia (strain J2315)) protein is Uracil phosphoribosyltransferase.